Reading from the N-terminus, the 331-residue chain is Polysaccharide lyase (331 aa).

Positions 1 to 22 are cleaved as a signal peptide; the sequence is MSLPLRLALLPTLLASASAFAA. Residue cysteine 23 is the site of N-palmitoyl cysteine attachment. Cysteine 23 is lipidated: S-diacylglycerol cysteine.

This sequence belongs to the polysaccharide lyase 5 family.

Its subcellular location is the cell outer membrane. It carries out the reaction Eliminative cleavage of alginate to give oligosaccharides with 4-deoxy-alpha-L-erythro-hex-4-enuronosyl groups at their non-reducing ends and beta-D-mannuronate at their reducing end.. The catalysed reaction is [hyaluronan](n) = n 3-(4-deoxy-beta-D-gluc-4-enuronosyl)-N-acetyl-D-glucosamine + H2O. The enzyme catalyses Eliminative cleavage of (1-&gt;4)-beta-D-glucuronans to give oligosaccharides with 4-deoxy-beta-D-gluc-4-enuronosyl groups at their non-reducing ends. Complete degradation of glucuronans results in the formation of tetrasaccharides.. Is inhibited by mono- and divalent cations as well as L-ascorbic acid 6-hexadecanoate. In terms of biological role, polysaccharide lyase that catalyzes the depolymerization of several anionic polysaccharides via a beta-elimination mechanism. Exhibits broad substrate specificity, catalyzing the degradation of not only alginate and poly-beta-D-mannuronate (poly-ManA), but poly-beta-D-glucuronate (poly-GlcA or poly-GlcUA) and hyaluronate (HA) as well. The oligosaccharide products formed by enzymatic cleavage are comprised mainly of disaccharides, with a lower abundance of trimers and pentamers. Is not active on poly-D-galacturonate, heparin and heparin sulfate. This Stenotrophomonas maltophilia (strain K279a) protein is Polysaccharide lyase.